We begin with the raw amino-acid sequence, 376 residues long: Probable tRNA sulfurtransferase (376 aa).

In terms of domain architecture, THUMP spans 51–152 (EENLKNLKYV…KNSVYVFDKS (102 aa)). ATP-binding positions include 170–171 (LI), 195–196 (TF), arginine 252, glycine 274, and glutamine 283.

It belongs to the ThiI family.

The protein resides in the cytoplasm. The catalysed reaction is [ThiI sulfur-carrier protein]-S-sulfanyl-L-cysteine + a uridine in tRNA + 2 reduced [2Fe-2S]-[ferredoxin] + ATP + H(+) = [ThiI sulfur-carrier protein]-L-cysteine + a 4-thiouridine in tRNA + 2 oxidized [2Fe-2S]-[ferredoxin] + AMP + diphosphate. It carries out the reaction [ThiS sulfur-carrier protein]-C-terminal Gly-Gly-AMP + S-sulfanyl-L-cysteinyl-[cysteine desulfurase] + AH2 = [ThiS sulfur-carrier protein]-C-terminal-Gly-aminoethanethioate + L-cysteinyl-[cysteine desulfurase] + A + AMP + 2 H(+). Its pathway is cofactor biosynthesis; thiamine diphosphate biosynthesis. Catalyzes the ATP-dependent transfer of a sulfur to tRNA to produce 4-thiouridine in position 8 of tRNAs, which functions as a near-UV photosensor. Also catalyzes the transfer of sulfur to the sulfur carrier protein ThiS, forming ThiS-thiocarboxylate. This is a step in the synthesis of thiazole, in the thiamine biosynthesis pathway. The sulfur is donated as persulfide by IscS. This chain is Probable tRNA sulfurtransferase, found in Mycoplasmopsis synoviae (strain 53) (Mycoplasma synoviae).